The primary structure comprises 153 residues: SQPHTKPSVFVMKNGTNVACLVKEFYPKDIRINLVSSKKITEFDPAIVISPSGKYNAVKLGKYEDSNSVTCSVQHDNKTVHSTDFEVKTDSTDHVKPKETENTKQPSKSCHKPKAIVHTEKVNMMSLTVLGLRMLFAKTVAVNFLLTAKLFFL.

N-linked (GlcNAc...) asparagine glycosylation occurs at Asn-14. Cys-20 and Cys-71 form a disulfide bridge. Residue Asn-77 is glycosylated (N-linked (GlcNAc...) asparagine). A compositionally biased stretch (basic and acidic residues) spans 85–102 (FEVKTDSTDHVKPKETEN). The tract at residues 85–112 (FEVKTDSTDHVKPKETENTKQPSKSCHK) is disordered. A helical transmembrane segment spans residues 130–152 (LGLRMLFAKTVAVNFLLTAKLFF).

Gamma-delta TR is a heterodimer composed of a gamma and delta chain; disulfide-linked. The gamma-delta TR is associated with the transmembrane signaling CD3 coreceptor proteins following the stoichiometry: a single gamma-delta TR heterodimer associates with one CD3D-CD3E heterodimer, one CD3G-CD3E heterodimer and one CD247 homodimer forming a stable octameric structure. Upon activation, gamma-delta TR complex associates with FCER1G to initiate intracellular signaling.

It is found in the cell membrane. In terms of biological role, constant region of T cell receptor (TR) delta chain that participates in the antigen recognition. Gamma-delta TRs recognize a variety of self and foreign non-peptide antigens frequently expressed at the epithelial boundaries between the host and external environment, including endogenous lipids presented by MH-like protein CD1D and phosphoantigens presented by butyrophilin-like molecule BTN3A1. Upon antigen recognition induces rapid, innate-like immune responses involved in pathogen clearance and tissue repair. Binding of gamma-delta TR complex to antigen triggers phosphorylation of immunoreceptor tyrosine-based activation motifs (ITAMs) in the CD3 chains by the LCK and FYN kinases, allowing the recruitment, phosphorylation, and activation of ZAP70 that facilitates phosphorylation of the scaffolding proteins LCP2 and LAT. This lead to the formation of a supramolecular signalosome that recruits the phospholipase PLCG1, resulting in calcium mobilization and ERK activation, ultimately leading to T cell expansion and differentiation into effector cells. Gamma-delta TRs are produced through somatic rearrangement of a limited repertoire of variable (V), diversity (D), and joining (J) genes. The potential diversity of gamma-delta TRs is conferred by the unique ability to rearrange (D) genes in tandem and to utilize all three reading frames. The combinatorial diversity is considerably increased by the sequence exonuclease trimming and random nucleotide (N) region additions which occur during the V-(D)-J rearrangements. This Homo sapiens (Human) protein is T cell receptor delta constant.